Reading from the N-terminus, the 348-residue chain is Rhodopsin (348 aa).

N-acetylmethionine is present on methionine 1. Over 1-36 (MNGTEGPNFYVPFSNITGVVRSPFEQPQYYLAEPWQ) the chain is Extracellular. Residues asparagine 2 and asparagine 15 are each glycosylated (N-linked (GlcNAc...) asparagine). A helical transmembrane segment spans residues 37 to 61 (FSMLAAYMFLLIVLGFPINFLTLYV). Residues 62–73 (TVQHKKLRTPLN) are Cytoplasmic-facing. The helical transmembrane segment at 74–96 (YILLNLAVADLFMVFGGFTTTLY) threads the bilayer. Over 97–110 (TSLHGYFVFGPTGC) the chain is Extracellular. A disulfide bridge connects residues cysteine 110 and cysteine 187. The chain crosses the membrane as a helical span at residues 111–133 (NLEGFFATLGGEIGLWSLVVLAI). The 'Ionic lock' involved in activated form stabilization signature appears at 134–136 (ERY). Over 134–152 (ERYVVVCKPMSNFRFGENH) the chain is Cytoplasmic. The chain crosses the membrane as a helical span at residues 153–173 (AIMGVAFTWVMALACAAPPLV). Over 174–202 (GWSRYIPEGMQCSCGIDYYTLKPEVNNES) the chain is Extracellular. Position 201 (glutamate 201) interacts with Zn(2+). The chain crosses the membrane as a helical span at residues 203-224 (FVIYMFVVHFTIPMIVIFFCYG). The Cytoplasmic portion of the chain corresponds to 225–252 (QLVFTVKEAAAQQQESATTQKAEKEVTR). The helical transmembrane segment at 253-274 (MVIIMVIFFLICWLPYASVAMY) threads the bilayer. Residues 275-286 (IFTHQGSNFGPI) are Extracellular-facing. Glutamine 279 provides a ligand contact to Zn(2+). A helical membrane pass occupies residues 287 to 308 (FMTLPAFFAKTASIYNPIIYIM). Position 296 is an N6-(retinylidene)lysine (lysine 296). Residues 309–348 (MNKQFRNCMLTSLCCGKNPLGDDEASATASKTETSQVAPA) are Cytoplasmic-facing. 2 S-palmitoyl cysteine lipidation sites follow: cysteine 322 and cysteine 323. Residues 330-348 (DDEASATASKTETSQVAPA) form an interaction with SAG region. Serine 334 carries the post-translational modification Phosphoserine. Threonine 336 is subject to Phosphothreonine. Serine 338 is subject to Phosphoserine. Threonine 340 and threonine 342 each carry phosphothreonine. Serine 343 is modified (phosphoserine).

This sequence belongs to the G-protein coupled receptor 1 family. Opsin subfamily. In terms of assembly, homodimer. May form a complex composed of RHO, GRK1 and RCVRN in a Ca(2+)-dependent manner; RCVRN prevents the interaction between GRK1 and RHO. Interacts with GRK1. Interacts (phosphorylated form) with SAG. Interacts with GNAT1. Interacts with GNAT3. SAG and G-proteins compete for a common binding site. Interacts with PRCD; the interaction promotes PRCD stability. Forms a complex with ASAP1 and ARF4. Forms a complex with ASAP1, RAB11A, Rabin8/RAB3IP, ARF4 and RAB11FIP3; the complex regulates Golgi-to-cilia rhodopsin/RHO transport in photoreceptors. Phosphorylated on some or all of the serine and threonine residues present in the C-terminal region. Post-translationally, contains one covalently linked retinal chromophore. Upon light absorption, the covalently bound 11-cis-retinal is converted to all-trans-retinal. After hydrolysis of the Schiff base and release of the covalently bound all-trans-retinal, active rhodopsin is regenerated by binding of a fresh molecule of 11-cis-retinal.

It is found in the membrane. It localises to the cell projection. The protein localises to the cilium. The protein resides in the photoreceptor outer segment. In terms of biological role, photoreceptor required for image-forming vision at low light intensity. Required for photoreceptor cell viability after birth. Light-induced isomerization of 11-cis to all-trans retinal triggers a conformational change that activates signaling via G-proteins. Subsequent receptor phosphorylation mediates displacement of the bound G-protein alpha subunit by the arrestin SAG and terminates signaling. The polypeptide is Rhodopsin (Rho) (Rattus norvegicus (Rat)).